Consider the following 218-residue polypeptide: Adenylate kinase (218 aa).

Glycine 12–threonine 17 serves as a coordination point for ATP. Residues serine 32–valine 61 form an NMP region. AMP-binding positions include threonine 33, arginine 38, glutamate 59–valine 61, glycine 85–arginine 88, and glutamine 92. The LID stretch occupies residues glycine 126–aspartate 164. ATP is bound at residue arginine 127. Positions 130 and 133 each coordinate Zn(2+). Valine 136 to tyrosine 137 provides a ligand contact to ATP. 2 residues coordinate Zn(2+): cysteine 150 and cysteine 153. AMP-binding residues include arginine 161 and arginine 172. Alanine 200 lines the ATP pocket.

The protein belongs to the adenylate kinase family. As to quaternary structure, monomer.

Its subcellular location is the cytoplasm. The catalysed reaction is AMP + ATP = 2 ADP. The protein operates within purine metabolism; AMP biosynthesis via salvage pathway; AMP from ADP: step 1/1. In terms of biological role, catalyzes the reversible transfer of the terminal phosphate group between ATP and AMP. Plays an important role in cellular energy homeostasis and in adenine nucleotide metabolism. This Paracoccus denitrificans (strain Pd 1222) protein is Adenylate kinase.